The following is a 416-amino-acid chain: UDP-N-acetylmuramoylalanine--D-glutamate ligase (416 aa).

108-114 (GTTGKTT) is a binding site for ATP.

Belongs to the MurCDEF family.

The protein resides in the cytoplasm. It carries out the reaction UDP-N-acetyl-alpha-D-muramoyl-L-alanine + D-glutamate + ATP = UDP-N-acetyl-alpha-D-muramoyl-L-alanyl-D-glutamate + ADP + phosphate + H(+). It functions in the pathway cell wall biogenesis; peptidoglycan biosynthesis. Functionally, cell wall formation. Catalyzes the addition of glutamate to the nucleotide precursor UDP-N-acetylmuramoyl-L-alanine (UMA). This is UDP-N-acetylmuramoylalanine--D-glutamate ligase from Chlamydia trachomatis serovar L2b (strain UCH-1/proctitis).